The primary structure comprises 282 residues: Stage 0 sporulation protein J (282 aa).

A DNA-binding region (H-T-H motif) is located at residues 139–158 (EQLAKRLGKSRPHIANHLRL).

Belongs to the ParB family.

It localises to the cytoplasm. The protein localises to the nucleoid. Required for the initiation of sporulation and for normal chromosome segregation. Antagonizes sporulation inhibition by Soj. It probably interacts with a specific DNA site and other proteins involved in partitioning and cell division, and antagonizes Soj in response to cell cycle events related to chromosome partitioning. In Bacillus subtilis (strain 168), this protein is Stage 0 sporulation protein J.